The following is a 320-amino-acid chain: Probable NAD(P)H-dependent D-xylose reductase xyl1 (320 aa).

The active-site Proton donor is tyrosine 50. A substrate-binding site is contributed by histidine 112. NAD(+)-binding positions include 167-168 (SN), 216-225 (SSFGPLSFLE), and 272-282 (KSNNPTRLSQN).

This sequence belongs to the aldo/keto reductase family.

It carries out the reaction xylitol + NAD(+) = D-xylose + NADH + H(+). The catalysed reaction is xylitol + NADP(+) = D-xylose + NADPH + H(+). Its pathway is carbohydrate metabolism; D-xylose degradation. In terms of biological role, catalyzes the initial reaction in the xylose utilization pathway by reducing D-xylose into xylitol. Xylose is a major component of hemicelluloses such as xylan. Most fungi utilize D-xylose via three enzymatic reactions, xylose reductase (XR), xylitol dehydrogenase (XDH), and xylulokinase, to form xylulose 5-phosphate, which enters pentose phosphate pathway. This Aspergillus terreus (strain NIH 2624 / FGSC A1156) protein is Probable NAD(P)H-dependent D-xylose reductase xyl1 (xyl1).